Consider the following 365-residue polypeptide: Histidinol-phosphate aminotransferase 2 (365 aa).

Lys-222 carries the N6-(pyridoxal phosphate)lysine modification.

Belongs to the class-II pyridoxal-phosphate-dependent aminotransferase family. Histidinol-phosphate aminotransferase subfamily. Homodimer. It depends on pyridoxal 5'-phosphate as a cofactor.

It catalyses the reaction L-histidinol phosphate + 2-oxoglutarate = 3-(imidazol-4-yl)-2-oxopropyl phosphate + L-glutamate. Its pathway is amino-acid biosynthesis; L-histidine biosynthesis; L-histidine from 5-phospho-alpha-D-ribose 1-diphosphate: step 7/9. This Bordetella parapertussis (strain 12822 / ATCC BAA-587 / NCTC 13253) protein is Histidinol-phosphate aminotransferase 2 (hisC2).